The primary structure comprises 186 residues: Ribosome-recycling factor (186 aa).

The protein belongs to the RRF family.

It is found in the cytoplasm. Responsible for the release of ribosomes from messenger RNA at the termination of protein biosynthesis. May increase the efficiency of translation by recycling ribosomes from one round of translation to another. This Burkholderia lata (strain ATCC 17760 / DSM 23089 / LMG 22485 / NCIMB 9086 / R18194 / 383) protein is Ribosome-recycling factor.